Reading from the N-terminus, the 301-residue chain is Probable alpha-L-glutamate ligase (301 aa).

Residues 104 to 287 (LQLLARKGIG…VAGQLIDYIE (184 aa)) enclose the ATP-grasp domain. Residues Lys-141, 178–179 (EF), Asp-187, and 211–213 (RSN) each bind ATP. Positions 248, 260, and 262 each coordinate Mg(2+). Residues Asp-248, Glu-260, and Asn-262 each contribute to the Mn(2+) site.

The protein belongs to the RimK family. Mg(2+) is required as a cofactor. It depends on Mn(2+) as a cofactor.

This Maridesulfovibrio salexigens (strain ATCC 14822 / DSM 2638 / NCIMB 8403 / VKM B-1763) (Desulfovibrio salexigens) protein is Probable alpha-L-glutamate ligase.